Consider the following 244-residue polypeptide: Small ribosomal subunit protein uS2 (244 aa).

It belongs to the universal ribosomal protein uS2 family.

The polypeptide is Small ribosomal subunit protein uS2 (Buchnera aphidicola subsp. Acyrthosiphon pisum (strain 5A)).